Consider the following 434-residue polypeptide: Tryptophan--tRNA ligase (434 aa).

ATP-binding positions include 14 to 16 (TTS) and 22 to 23 (GN). Residues 15-23 (TSGTPHLGN) carry the 'HIGH' region motif. Residue Asp147 participates in L-tryptophan binding. ATP is bound by residues 159–161 (GRD), Leu199, and 206–210 (KMSKS). Positions 206–210 (KMSKS) match the 'KMSKS' region motif.

Belongs to the class-I aminoacyl-tRNA synthetase family. As to quaternary structure, homodimer.

The protein resides in the cytoplasm. It carries out the reaction tRNA(Trp) + L-tryptophan + ATP = L-tryptophyl-tRNA(Trp) + AMP + diphosphate + H(+). In terms of biological role, catalyzes the attachment of tryptophan to tRNA(Trp). This is Tryptophan--tRNA ligase from Xylella fastidiosa (strain 9a5c).